Reading from the N-terminus, the 190-residue chain is Large ribosomal subunit protein bL25 (190 aa).

A disordered region spans residues 1-20 (MSEQKTLSVQKRDNLGKGAN).

This sequence belongs to the bacterial ribosomal protein bL25 family. CTC subfamily. In terms of assembly, part of the 50S ribosomal subunit; part of the 5S rRNA/L5/L18/L25 subcomplex. Contacts the 5S rRNA. Binds to the 5S rRNA independently of L5 and L18.

Functionally, this is one of the proteins that binds to the 5S RNA in the ribosome where it forms part of the central protuberance. The chain is Large ribosomal subunit protein bL25 from Nitratidesulfovibrio vulgaris (strain ATCC 29579 / DSM 644 / CCUG 34227 / NCIMB 8303 / VKM B-1760 / Hildenborough) (Desulfovibrio vulgaris).